The primary structure comprises 1027 residues: Sodium/potassium-transporting ATPase subunit alpha-1 (1027 aa).

Positions M1 to D5 are excised as a propeptide. Positions M1–Y10 are enriched in basic and acidic residues. Residues M1–K39 are disordered. At G6–P90 the chain is on the cytoplasmic side. Position 16 is a phosphoserine; by PKC (S16). A compositionally biased stretch (basic and acidic residues) spans E29–K39. The segment at P85–P87 is interaction with phosphoinositide-3 kinase. The chain crosses the membrane as a helical span at residues E91–A111. The Extracellular portion of the chain corresponds to V112–Y134. A helical membrane pass occupies residues L135–A155. The Cytoplasmic segment spans residues K156–I291. A disordered region spans residues D217–N238. Residues E292 to L311 traverse the membrane as a helical segment. Topologically, residues L312–A323 are extracellular. The chain crosses the membrane as a helical span at residues V324–A341. The Cytoplasmic portion of the chain corresponds to T342 to L776. D379 (4-aspartylphosphate intermediate) is an active-site residue. Residue K490 participates in ATP binding. Positions 721 and 725 each coordinate Mg(2+). The helical transmembrane segment at K777–F796 threads the bilayer. Residues F797–L806 are Extracellular-facing. A helical membrane pass occupies residues G807–A827. Over Y828 to K847 the chain is Cytoplasmic. The helical transmembrane segment at L848–F870 threads the bilayer. The Extracellular portion of the chain corresponds to F871–C922. A helical membrane pass occupies residues H923–K942. At T943 to N955 the chain is on the cytoplasmic side. S947 carries the phosphoserine; by PKA modification. The helical transmembrane segment at K956 to Y974 threads the bilayer. At C975–P989 the chain is on the extracellular side. A helical transmembrane segment spans residues N990–K1010. Over L1011 to Y1027 the chain is Cytoplasmic.

It belongs to the cation transport ATPase (P-type) (TC 3.A.3) family. Type IIC subfamily. In terms of assembly, the sodium/potassium-transporting ATPase is composed of a catalytic alpha subunit, an auxiliary non-catalytic beta subunit and an additional regulatory subunit.

It is found in the cell membrane. It localises to the sarcolemma. The catalysed reaction is K(+)(out) + Na(+)(in) + ATP + H2O = K(+)(in) + Na(+)(out) + ADP + phosphate + H(+). Functionally, this is the catalytic component of the active enzyme, which catalyzes the hydrolysis of ATP coupled with the exchange of sodium and potassium ions across the plasma membrane. This action creates the electrochemical gradient of sodium and potassium ions, providing the energy for active transport of various nutrients. This is Sodium/potassium-transporting ATPase subunit alpha-1 (atp1a1) from Catostomus commersonii (White sucker).